The primary structure comprises 150 residues: UPF0735 ACT domain-containing protein Csac_0995 (150 aa).

The ACT domain maps to 72 to 147 (TLALVLQDVP…GVKKIEILGR (76 aa)).

This sequence belongs to the UPF0735 family.

This is UPF0735 ACT domain-containing protein Csac_0995 from Caldicellulosiruptor saccharolyticus (strain ATCC 43494 / DSM 8903 / Tp8T 6331).